The following is a 102-amino-acid chain: Small ribosomal subunit protein uS10 (102 aa).

The protein belongs to the universal ribosomal protein uS10 family. In terms of assembly, part of the 30S ribosomal subunit.

In terms of biological role, involved in the binding of tRNA to the ribosomes. The chain is Small ribosomal subunit protein uS10 from Thermotoga neapolitana (strain ATCC 49049 / DSM 4359 / NBRC 107923 / NS-E).